The following is a 149-amino-acid chain: Small ribosomal subunit protein uS9 (149 aa).

It belongs to the universal ribosomal protein uS9 family.

Its subcellular location is the cytoplasm. The sequence is that of Small ribosomal subunit protein uS9 (RPS16A) from Oryza sativa subsp. indica (Rice).